Consider the following 292-residue polypeptide: ATP synthase gamma chain (292 aa).

It belongs to the ATPase gamma chain family. In terms of assembly, F-type ATPases have 2 components, CF(1) - the catalytic core - and CF(0) - the membrane proton channel. CF(1) has five subunits: alpha(3), beta(3), gamma(1), delta(1), epsilon(1). CF(0) has three main subunits: a, b and c.

It is found in the cell membrane. Functionally, produces ATP from ADP in the presence of a proton gradient across the membrane. The gamma chain is believed to be important in regulating ATPase activity and the flow of protons through the CF(0) complex. This Streptococcus mutans serotype c (strain ATCC 700610 / UA159) protein is ATP synthase gamma chain.